The chain runs to 108 residues: Thiosulfate sulfurtransferase GlpE (108 aa).

A Rhodanese domain is found at 18 to 106 (QNEDAVLVDI…WVRSELPIEL (89 aa)). Cys66 (cysteine persulfide intermediate) is an active-site residue.

The protein belongs to the GlpE family.

It localises to the cytoplasm. It carries out the reaction thiosulfate + hydrogen cyanide = thiocyanate + sulfite + 2 H(+). It catalyses the reaction thiosulfate + [thioredoxin]-dithiol = [thioredoxin]-disulfide + hydrogen sulfide + sulfite + 2 H(+). Transferase that catalyzes the transfer of sulfur from thiosulfate to thiophilic acceptors such as cyanide or dithiols. May function in a CysM-independent thiosulfate assimilation pathway by catalyzing the conversion of thiosulfate to sulfite, which can then be used for L-cysteine biosynthesis. The chain is Thiosulfate sulfurtransferase GlpE from Glaesserella parasuis serovar 5 (strain SH0165) (Haemophilus parasuis).